Reading from the N-terminus, the 371-residue chain is o-succinylbenzoate synthase (371 aa).

The active-site Proton donor is the lysine 164. 3 residues coordinate Mg(2+): aspartate 189, glutamate 214, and aspartate 239. Lysine 263 acts as the Proton acceptor in catalysis.

Belongs to the mandelate racemase/muconate lactonizing enzyme family. MenC type 2 subfamily. Requires a divalent metal cation as cofactor.

The enzyme catalyses (1R,6R)-6-hydroxy-2-succinyl-cyclohexa-2,4-diene-1-carboxylate = 2-succinylbenzoate + H2O. It participates in quinol/quinone metabolism; 1,4-dihydroxy-2-naphthoate biosynthesis; 1,4-dihydroxy-2-naphthoate from chorismate: step 4/7. The protein operates within quinol/quinone metabolism; menaquinone biosynthesis. In terms of biological role, converts 2-succinyl-6-hydroxy-2,4-cyclohexadiene-1-carboxylate (SHCHC) to 2-succinylbenzoate (OSB). Does not show detectable N-acylamino acid racemase (NAAAR) activity with N-acetyl-S-methionine as substrate. The chain is o-succinylbenzoate synthase from Bacillus subtilis (strain 168).